The following is a 159-amino-acid chain: Phosphopantetheine adenylyltransferase (159 aa).

Residue Thr10 coordinates substrate. ATP-binding positions include 10 to 11 (TF) and His18. Residues Lys42, Met74, and Arg88 each coordinate substrate. ATP contacts are provided by residues 89–91 (GLR), Glu99, and 124–130 (WSFISSS).

It belongs to the bacterial CoaD family. In terms of assembly, homohexamer. It depends on Mg(2+) as a cofactor.

Its subcellular location is the cytoplasm. It carries out the reaction (R)-4'-phosphopantetheine + ATP + H(+) = 3'-dephospho-CoA + diphosphate. Its pathway is cofactor biosynthesis; coenzyme A biosynthesis; CoA from (R)-pantothenate: step 4/5. In terms of biological role, reversibly transfers an adenylyl group from ATP to 4'-phosphopantetheine, yielding dephospho-CoA (dPCoA) and pyrophosphate. This chain is Phosphopantetheine adenylyltransferase, found in Salmonella agona (strain SL483).